The sequence spans 233 residues: Phosphoribosylformylglycinamidine synthase subunit PurQ (233 aa).

Residues 3–233 (SAILVFPGIN…GLVEHLAKAA (231 aa)) enclose the Glutamine amidotransferase type-1 domain. The Nucleophile role is filled by Cys87. Catalysis depends on residues His204 and Glu206.

In terms of assembly, part of the FGAM synthase complex composed of 1 PurL, 1 PurQ and 2 PurS subunits.

The protein resides in the cytoplasm. It carries out the reaction N(2)-formyl-N(1)-(5-phospho-beta-D-ribosyl)glycinamide + L-glutamine + ATP + H2O = 2-formamido-N(1)-(5-O-phospho-beta-D-ribosyl)acetamidine + L-glutamate + ADP + phosphate + H(+). The enzyme catalyses L-glutamine + H2O = L-glutamate + NH4(+). The protein operates within purine metabolism; IMP biosynthesis via de novo pathway; 5-amino-1-(5-phospho-D-ribosyl)imidazole from N(2)-formyl-N(1)-(5-phospho-D-ribosyl)glycinamide: step 1/2. Part of the phosphoribosylformylglycinamidine synthase complex involved in the purines biosynthetic pathway. Catalyzes the ATP-dependent conversion of formylglycinamide ribonucleotide (FGAR) and glutamine to yield formylglycinamidine ribonucleotide (FGAM) and glutamate. The FGAM synthase complex is composed of three subunits. PurQ produces an ammonia molecule by converting glutamine to glutamate. PurL transfers the ammonia molecule to FGAR to form FGAM in an ATP-dependent manner. PurS interacts with PurQ and PurL and is thought to assist in the transfer of the ammonia molecule from PurQ to PurL. In Rhodopseudomonas palustris (strain BisB18), this protein is Phosphoribosylformylglycinamidine synthase subunit PurQ.